We begin with the raw amino-acid sequence, 689 residues long: MATSQRKILVTSALPYANGPIHLGHMLEYIQTDIWSRYQKLRGHECHYICADDAHGTPIMLKAQQLGLAPEEMIAQVNKEHQQDFADFNIAFDNYHSTHSDENRVLASDIYLKLRTNGYIKSKSISQLFDPEKSMFLPDRFVKGTCPKCKSPDQYGDNCDACGATYSPTELINPKSAVSGATPVMKDTEHFFFDLPAFEGMLKEWTRSGALQTEMANKLDEWFEQGLQQWDITRDAPYFGFEIPDAPGKYFYVWLDAPIGYMGSFKNLCDKRPELSFDEFWAKDSKAEVYHFIGKDIVYFHSLFWPAMLHGSGYRQPNSVYAHGYVTVNGAKMSKSKGTFIKARTYLDHLDPEYLRYYYAAKLSSRIDDLDLNLEDFAQRVNSDLVGKLVNLASRTAGFITKRFDGKLAKIADTTLTEAFLAKQEQIAEFYETREYGKAMREIMALADIANGFVADAAPWQMVKQDDQQEAAHQVCSNALNLFRILVTYLKPVLPRLAQDVEAFFQQTLTWDGLAQDMAGHEISPFKAMMQRVELDKVNAMVADSKENLQVTADVPKTAKPEKTVESSNVSSEPLVDDPISETINFDDFAKIDLRIARIVKAEHVAEADKLLKLQLDIGGETRQVFAGIKSAYSPEDLEGKLTVMVANLAPRKMRFGMSEGMVLAAGPGGSDLWILEPHEGAQPGMRVK.

Residues 15–25 (PYANGPIHLGH) carry the 'HIGH' region motif. Zn(2+)-binding residues include Cys-146, Cys-149, Cys-159, and Cys-162. The short motif at 332 to 336 (KMSKS) is the 'KMSKS' region element. Position 335 (Lys-335) interacts with ATP. Positions 588–689 (DFAKIDLRIA…EGAQPGMRVK (102 aa)) constitute a tRNA-binding domain.

The protein belongs to the class-I aminoacyl-tRNA synthetase family. MetG type 1 subfamily. Homodimer. It depends on Zn(2+) as a cofactor.

The protein localises to the cytoplasm. It carries out the reaction tRNA(Met) + L-methionine + ATP = L-methionyl-tRNA(Met) + AMP + diphosphate. Its function is as follows. Is required not only for elongation of protein synthesis but also for the initiation of all mRNA translation through initiator tRNA(fMet) aminoacylation. In Shewanella sp. (strain W3-18-1), this protein is Methionine--tRNA ligase.